A 777-amino-acid polypeptide reads, in one-letter code: DNA repair helicase/translocase XPB-R (777 aa).

Residues 212–416 enclose the Helicase ATP-binding domain; the sequence is AASDGALRSG…DLFHLVGPKL (205 aa). 225–232 lines the ATP pocket; it reads LPCGSGKT. A DEVH box motif is present at residues 369–372; the sequence is DEVH. Residues 484-631 enclose the Helicase C-terminal domain; sequence IVKRHVAESS…GYTCSVTEFN (148 aa).

It belongs to the helicase family. RAD25/XPB subfamily.

It carries out the reaction Couples ATP hydrolysis with the unwinding of duplex DNA by translocating in the 3'-5' direction.. The enzyme catalyses ATP + H2O = ADP + phosphate + H(+). Its function is as follows. ATP-dependent 3'-5' DNA helicase/translocase; binds dsDNA rather than ssDNA, unzipping it in a translocase rather than classical helicase activity. Involved in nucleotide excision repair (NER) of damaged DNA. XPB-R is a paralog of XBP, but is not a component of the TFIIH basal transcription factor and is dispensable for RNA polymerase II transcription. The protein is DNA repair helicase/translocase XPB-R of Trypanosoma brucei brucei (strain 927/4 GUTat10.1).